The following is a 372-amino-acid chain: Protein REVEILLE 7 (372 aa).

One can recognise an HTH myb-type domain in the interval 71 to 125 (TVTKQREKWSEEEHDRFLEAIKLYGRGWRQIQEHIGTKTAVQIRSHAQKFFSKMA). A DNA-binding region (H-T-H motif) is located at residues 98 to 121 (WRQIQEHIGTKTAVQIRSHAQKFF). Positions 124 to 204 (MAQEADSRSE…RCSSPNSCTS (81 aa)) are disordered. Residues 145-155 (RPKRKPAHPYP) are compositionally biased toward basic residues. Residues 156–169 (RKSPVPYTQSPPPN) are compositionally biased toward pro residues. Residues 178–204 (KSPTSVLSSFGSEDQVNRCSSPNSCTS) show a composition bias toward polar residues.

It is found in the nucleus. Transcription factor involved in phytochrome A-mediated cotyledon opening. Controlled by the central oscillator mediated by LHY and CCA1. Part of a regulatory circadian feedback loop. Regulates its own expression. The chain is Protein REVEILLE 7 (RVE7) from Arabidopsis thaliana (Mouse-ear cress).